Reading from the N-terminus, the 256-residue chain is 14-3-3-like protein GF14-C (256 aa).

Belongs to the 14-3-3 family. May form a complex with the transcriptional activator VP1 and the bZIP transcription factor EMBP1. Expressed in seedlings, internodes and panicles.

The protein localises to the cytoplasm. Its subcellular location is the nucleus. In terms of biological role, is associated with a DNA binding complex that binds to the G box, a well-characterized cis-acting DNA regulatory element found in plant genes. This Oryza sativa subsp. japonica (Rice) protein is 14-3-3-like protein GF14-C (GF14C).